The following is a 545-amino-acid chain: Lysine--tRNA ligase (545 aa).

A 'HIGH' region motif is present at residues 42–50; that stretch reads PSGVPHIGH. The 'KMSKS' region signature appears at 307–311; the sequence is PLSSS.

Belongs to the class-I aminoacyl-tRNA synthetase family.

It is found in the cytoplasm. The enzyme catalyses tRNA(Lys) + L-lysine + ATP = L-lysyl-tRNA(Lys) + AMP + diphosphate. This Haloarcula marismortui (strain ATCC 43049 / DSM 3752 / JCM 8966 / VKM B-1809) (Halobacterium marismortui) protein is Lysine--tRNA ligase.